The sequence spans 570 residues: Urease subunit alpha (570 aa).

Residues glycine 131–phenylalanine 570 form the Urease domain. Ni(2+)-binding residues include histidine 136, histidine 138, and lysine 219. Lysine 219 bears the N6-carboxylysine mark. Position 221 (histidine 221) interacts with substrate. Ni(2+) is bound by residues histidine 248 and histidine 274. Histidine 322 serves as the catalytic Proton donor. Aspartate 362 is a binding site for Ni(2+).

Belongs to the metallo-dependent hydrolases superfamily. Urease alpha subunit family. In terms of assembly, heterotrimer of UreA (gamma), UreB (beta) and UreC (alpha) subunits. Three heterotrimers associate to form the active enzyme. Ni cation serves as cofactor. Carboxylation allows a single lysine to coordinate two nickel ions.

It is found in the cytoplasm. It catalyses the reaction urea + 2 H2O + H(+) = hydrogencarbonate + 2 NH4(+). Its pathway is nitrogen metabolism; urea degradation; CO(2) and NH(3) from urea (urease route): step 1/1. The chain is Urease subunit alpha from Sinorhizobium fredii (strain NBRC 101917 / NGR234).